We begin with the raw amino-acid sequence, 125 residues long: Small ribosomal subunit protein uS12 (125 aa).

At aspartate 89 the chain carries 3-methylthioaspartic acid.

It belongs to the universal ribosomal protein uS12 family. In terms of assembly, part of the 30S ribosomal subunit. Contacts proteins S8 and S17. May interact with IF1 in the 30S initiation complex.

Its function is as follows. With S4 and S5 plays an important role in translational accuracy. In terms of biological role, interacts with and stabilizes bases of the 16S rRNA that are involved in tRNA selection in the A site and with the mRNA backbone. Located at the interface of the 30S and 50S subunits, it traverses the body of the 30S subunit contacting proteins on the other side and probably holding the rRNA structure together. The combined cluster of proteins S8, S12 and S17 appears to hold together the shoulder and platform of the 30S subunit. The sequence is that of Small ribosomal subunit protein uS12 from Cupriavidus necator (strain ATCC 17699 / DSM 428 / KCTC 22496 / NCIMB 10442 / H16 / Stanier 337) (Ralstonia eutropha).